Consider the following 255-residue polypeptide: uncharacterized protein (255 aa).

Residues 3–58 form the HTH deoR-type domain; that stretch reads PVERRQIILEMVAEKGIVSIAELTDRMNVSHMTIRRDLQKLEQQGAVVLVSGGVQS. The segment at residues 20–39 is a DNA-binding region (H-T-H motif); that stretch reads VSIAELTDRMNVSHMTIRRD.

This is an uncharacterized protein from Escherichia coli (strain K12).